The chain runs to 513 residues: ATP synthase subunit alpha (513 aa).

169 to 176 (GDRQTGKT) contributes to the ATP binding site.

The protein belongs to the ATPase alpha/beta chains family. F-type ATPases have 2 components, CF(1) - the catalytic core - and CF(0) - the membrane proton channel. CF(1) has five subunits: alpha(3), beta(3), gamma(1), delta(1), epsilon(1). CF(0) has three main subunits: a(1), b(2) and c(9-12). The alpha and beta chains form an alternating ring which encloses part of the gamma chain. CF(1) is attached to CF(0) by a central stalk formed by the gamma and epsilon chains, while a peripheral stalk is formed by the delta and b chains.

The protein resides in the cell inner membrane. It catalyses the reaction ATP + H2O + 4 H(+)(in) = ADP + phosphate + 5 H(+)(out). In terms of biological role, produces ATP from ADP in the presence of a proton gradient across the membrane. The alpha chain is a regulatory subunit. In Shewanella sp. (strain ANA-3), this protein is ATP synthase subunit alpha.